The sequence spans 463 residues: Ribosomal protein uS12 methylthiotransferase RimO (463 aa).

Residues P15–P130 form the MTTase N-terminal domain. The [4Fe-4S] cluster site is built by C24, C60, C89, C161, C165, and C168. The 246-residue stretch at L147–K392 folds into the Radical SAM core domain. Residues A395–V463 form the TRAM domain.

The protein belongs to the methylthiotransferase family. RimO subfamily. Requires [4Fe-4S] cluster as cofactor.

It localises to the cytoplasm. It carries out the reaction L-aspartate(89)-[ribosomal protein uS12]-hydrogen + (sulfur carrier)-SH + AH2 + 2 S-adenosyl-L-methionine = 3-methylsulfanyl-L-aspartate(89)-[ribosomal protein uS12]-hydrogen + (sulfur carrier)-H + 5'-deoxyadenosine + L-methionine + A + S-adenosyl-L-homocysteine + 2 H(+). Functionally, catalyzes the methylthiolation of an aspartic acid residue of ribosomal protein uS12. This Paraburkholderia phymatum (strain DSM 17167 / CIP 108236 / LMG 21445 / STM815) (Burkholderia phymatum) protein is Ribosomal protein uS12 methylthiotransferase RimO.